We begin with the raw amino-acid sequence, 149 residues long: 3-dehydroquinate dehydratase (149 aa).

Catalysis depends on Y24, which acts as the Proton acceptor. N75, H81, and D88 together coordinate substrate. H101 acts as the Proton donor in catalysis. Residues 102 to 103 (IS) and R112 each bind substrate.

This sequence belongs to the type-II 3-dehydroquinase family. As to quaternary structure, homododecamer.

It catalyses the reaction 3-dehydroquinate = 3-dehydroshikimate + H2O. It functions in the pathway metabolic intermediate biosynthesis; chorismate biosynthesis; chorismate from D-erythrose 4-phosphate and phosphoenolpyruvate: step 3/7. In terms of biological role, catalyzes a trans-dehydration via an enolate intermediate. The sequence is that of 3-dehydroquinate dehydratase from Methylobacterium radiotolerans (strain ATCC 27329 / DSM 1819 / JCM 2831 / NBRC 15690 / NCIMB 10815 / 0-1).